A 196-amino-acid chain; its full sequence is Putative 3-methyladenine DNA glycosylase (196 aa).

It belongs to the DNA glycosylase MPG family.

The chain is Putative 3-methyladenine DNA glycosylase from Bacillus licheniformis (strain ATCC 14580 / DSM 13 / JCM 2505 / CCUG 7422 / NBRC 12200 / NCIMB 9375 / NCTC 10341 / NRRL NRS-1264 / Gibson 46).